The sequence spans 206 residues: Uridine kinase (206 aa).

11–18 contacts ATP; sequence GGTGSGKS.

This sequence belongs to the uridine kinase family.

The protein localises to the cytoplasm. It catalyses the reaction uridine + ATP = UMP + ADP + H(+). The enzyme catalyses cytidine + ATP = CMP + ADP + H(+). It functions in the pathway pyrimidine metabolism; CTP biosynthesis via salvage pathway; CTP from cytidine: step 1/3. The protein operates within pyrimidine metabolism; UMP biosynthesis via salvage pathway; UMP from uridine: step 1/1. The protein is Uridine kinase of Clostridium botulinum (strain Kyoto / Type A2).